Reading from the N-terminus, the 354-residue chain is UPF0283 membrane protein Meso_1416 (354 aa).

Residues Met1–Arg28 form a disordered region. 2 helical membrane passes run Leu71–Ala91 and Leu105–Val125.

The protein belongs to the UPF0283 family.

The protein resides in the cell inner membrane. In Chelativorans sp. (strain BNC1), this protein is UPF0283 membrane protein Meso_1416.